The sequence spans 491 residues: AP-2 complex subunit mu (491 aa).

Residues S179, S180, and S181 each carry the phosphoserine modification. Positions 209 to 490 (KDEVFLYVNE…ISKAGSYEVR (282 aa)) constitute an MHD domain.

Belongs to the adaptor complexes medium subunit family. As to quaternary structure, adaptor protein complex 2 (AP-2) is a heterotetramer composed of two large adaptins (alpha-type subunit APL3 and beta-type subunit APL1), a medium chain (mu-type subunit APM4) and a small adaptin (sigma-type subunit APS2).

It localises to the membrane. It is found in the clathrin-coated pit. The protein resides in the cytoplasmic vesicle. Its subcellular location is the clathrin-coated vesicle membrane. Component of the adaptor complexes which link clathrin to receptors in coated vesicles. Clathrin-associated protein complexes are believed to interact with the cytoplasmic tails of membrane proteins, leading to their selection and concentration. This is AP-2 complex subunit mu (APM4) from Saccharomyces cerevisiae (strain ATCC 204508 / S288c) (Baker's yeast).